A 98-amino-acid chain; its full sequence is Integration host factor subunit alpha (98 aa).

The segment at Phe-49 to Ile-71 is disordered.

The protein belongs to the bacterial histone-like protein family. As to quaternary structure, heterodimer of an alpha and a beta chain.

Its function is as follows. This protein is one of the two subunits of integration host factor, a specific DNA-binding protein that functions in genetic recombination as well as in transcriptional and translational control. This Shewanella halifaxensis (strain HAW-EB4) protein is Integration host factor subunit alpha.